Consider the following 150-residue polypeptide: Large ribosomal subunit protein uL13 (150 aa).

The interval 129 to 150 (TEHPHAAQKPQPLQLNPSASAQ) is disordered. Polar residues predominate over residues 139 to 150 (QPLQLNPSASAQ).

The protein belongs to the universal ribosomal protein uL13 family. Part of the 50S ribosomal subunit.

In terms of biological role, this protein is one of the early assembly proteins of the 50S ribosomal subunit, although it is not seen to bind rRNA by itself. It is important during the early stages of 50S assembly. The protein is Large ribosomal subunit protein uL13 of Synechococcus sp. (strain CC9605).